We begin with the raw amino-acid sequence, 224 residues long: UPF0173 metal-dependent hydrolase Memar_1421 (224 aa).

Belongs to the UPF0173 family.

This is UPF0173 metal-dependent hydrolase Memar_1421 from Methanoculleus marisnigri (strain ATCC 35101 / DSM 1498 / JR1).